The primary structure comprises 841 residues: Outer membrane usher protein MyfC (841 aa).

Residues 1 to 26 form the signal peptide; it reads MFFSLKNSVAKLIAFWAICLVLPVWA. Residues Cys817 and Cys840 are joined by a disulfide bond.

It belongs to the fimbrial export usher family.

The protein resides in the cell outer membrane. Functionally, involved in the export and assembly of the MyfA fimbrial subunit. The sequence is that of Outer membrane usher protein MyfC (myfC) from Yersinia enterocolitica.